Here is a 489-residue protein sequence, read N- to C-terminus: Cytochrome P450 monooxygenase AMT3 (489 aa).

A helical membrane pass occupies residues 292–312; sequence LFMVAGTETTITALSGLVFLL. Cys436 is a heme binding site.

This sequence belongs to the cytochrome P450 family. Requires heme as cofactor.

It localises to the membrane. It functions in the pathway mycotoxin biosynthesis. Cytochrome P450 monooxygenase; part of the gene clusters that mediate the biosynthesis of AM-toxins, host-selective toxins (HSTs) causing Alternaria blotch on apple, a worldwide distributed disease. AM-toxins are cyclic depsipeptides containing the 3 residues 2-hydroxy-isovaleric acid (2-HIV), dehydroalanine, L-alanine which are common for all 3 AM-toxins I to III. The fourth precursor is L-alpha-amino-methoxyphenyl-valeric acid (L-Amv) for AM-toxin I, L-alpha-amino-phenyl-valeric acid (L-Apv) for AM-toxin II, and L-alpha-amino-hydroxyphenyl-valeric acid (L-Ahv) for AM-toxin III. AM-toxins have two target sites for affecting susceptible apple cells; they cause invagination of the plasma membrane and electrolyte loss and chloroplast disorganization. The non-ribosomal peptide synthetase AMT1 contains 4 catalytic modules and is responsible for activation of each residue in AM-toxin. The aldo-keto reductase AMT2 catalyzes the conversion of 2-keto-isovaleric acid (2-KIV) to 2-hydroxy-isovaleric acid (2-HIV), one of the precursor residues incorporated by AMT1 during AM-toxin biosynthesis, by reduction of its ketone to an alcohol. The cytochrome P450 monooxygenase AMT3 and the thioesterase AMT4 are also important for AM-toxin production, but their exact function within the AM-toxin biosynthesis are not known yet. Up to 21 proteins (including AMT1 to AMT4) are predicted to be involved in AM-toxin biosynthesis since their expression ishighly up-regulated in AM-toxin-producing cultures. This is Cytochrome P450 monooxygenase AMT3 from Alternaria alternata (Alternaria rot fungus).